The primary structure comprises 464 residues: Multifunctional dye peroxidase DyP2 (464 aa).

Aspartate 203 functions as the Proton acceptor in the catalytic mechanism. Glutamate 258, glutamate 273, and glutamate 284 together coordinate Mn(2+). Histidine 321 serves as a coordination point for heme.

This sequence belongs to the DyP-type peroxidase family. As to quaternary structure, exists both as a monomeric and oligomeric species in solution; the monomeric form contains no bound heme cofactor and is inactive. Heme b is required as a cofactor. Mn(2+) serves as cofactor.

Its subcellular location is the secreted. It carries out the reaction 1-(4-hydroxy-3-methoxyphenyl)-2-(2-methoxyphenoxy)propane-1,3-diol + H2O2 = guaiacol + vanillin + glycolaldehyde + H2O. The catalysed reaction is 2 Mn(2+) + H2O2 + 2 H(+) = 2 Mn(3+) + 2 H2O. The enzyme catalyses 2 a phenolic donor + H2O2 = 2 a phenolic radical donor + 2 H2O. It catalyses the reaction Reactive Blue 5 + 2 H2O2 = 2,2'-disulfonyl azobenzene + 3-[(4-amino-6-chloro-1,3,5-triazin-2-yl)amino]benzenesulfonate + phthalate + 2 H2O + 2 H(+). In terms of biological role, displays both high peroxidase and manganese peroxidase activity. Is likely involved in lignin degradation. Also has a Mn-dependent oxidase mode of action that expands its substrate scope in vitro; is thus able to catalyze the O(2)- and Mn-dependent oxidative decarboxylation of 4-methoxymandelate to anisaldehyde. In Amycolatopsis sp. (strain ATCC 39116 / 75iv2), this protein is Multifunctional dye peroxidase DyP2.